The following is a 180-amino-acid chain: MAETATIARPYAEALFRVASEAGAGNLGAWSELVSEMGQVAANPDMQALATDPNISGDKLEEVFLSVLKSPVNDEARRFVKLLVENSRLTALPEIAEQFHALKNAREGSSDVEITSAFPLDASQTNELVAALERKFGRKLYAKVAVDPSLIGGVSVKVGDEVLDTSVRSRLAAMQAALTA.

It belongs to the ATPase delta chain family. As to quaternary structure, F-type ATPases have 2 components, F(1) - the catalytic core - and F(0) - the membrane proton channel. F(1) has five subunits: alpha(3), beta(3), gamma(1), delta(1), epsilon(1). F(0) has three main subunits: a(1), b(2) and c(10-14). The alpha and beta chains form an alternating ring which encloses part of the gamma chain. F(1) is attached to F(0) by a central stalk formed by the gamma and epsilon chains, while a peripheral stalk is formed by the delta and b chains.

It localises to the cell inner membrane. F(1)F(0) ATP synthase produces ATP from ADP in the presence of a proton or sodium gradient. F-type ATPases consist of two structural domains, F(1) containing the extramembraneous catalytic core and F(0) containing the membrane proton channel, linked together by a central stalk and a peripheral stalk. During catalysis, ATP synthesis in the catalytic domain of F(1) is coupled via a rotary mechanism of the central stalk subunits to proton translocation. Functionally, this protein is part of the stalk that links CF(0) to CF(1). It either transmits conformational changes from CF(0) to CF(1) or is implicated in proton conduction. In Cupriavidus metallidurans (strain ATCC 43123 / DSM 2839 / NBRC 102507 / CH34) (Ralstonia metallidurans), this protein is ATP synthase subunit delta.